Consider the following 205-residue polypeptide: MPSKKKKYNARFPPARIKKIMQTDEEIGKVAAAVPVIISRALELFLESLLKKACQVTQSRNAKTMTTSHLKQCIELEQQFDFLKDLVASVPDMQGDGEDNHTDGDKGPRRGRKPGSSGRKNGGTGSKSKDKKLSGTDSEQEDESEDTDTDGEEETPQAPPQASHPPAHFQSPPTPFMPFTSPLPLPPAPPGPSAPEAEDEEDYDS.

The Histone-fold domain occupies 14 to 77; sequence PARIKKIMQT…SHLKQCIELE (64 aa). The tract at residues 91–205 is disordered; the sequence is PDMQGDGEDN…EAEDEEDYDS (115 aa). Basic and acidic residues predominate over residues 98–108; sequence EDNHTDGDKGP. The span at 138–155 shows a compositional bias: acidic residues; sequence SEQEDESEDTDTDGEEET. Residues 172 to 193 show a composition bias toward pro residues; it reads PPTPFMPFTSPLPLPPAPPGPS. Residues 196–205 are compositionally biased toward acidic residues; that stretch reads EAEDEEDYDS.

It belongs to the NC2 alpha/DRAP1 family. Heterodimer with DR1. Binds BTAF1. In terms of processing, phosphorylation reduces DNA binding, but has no effect on heterodimerization and TBP binding.

It is found in the nucleus. The association of the DR1/DRAP1 heterodimer with TBP results in a functional repression of both activated and basal transcription of class II genes. This interaction precludes the formation of a transcription-competent complex by inhibiting the association of TFIIA and/or TFIIB with TBP. Can bind to DNA on its own. This is Dr1-associated corepressor from Rattus norvegicus (Rat).